The chain runs to 284 residues: D-tagatose-1,6-bisphosphate aldolase subunit GatY (284 aa).

Catalysis depends on aspartate 82, which acts as the Proton donor. Zn(2+) contacts are provided by histidine 83 and histidine 180. Glycine 181 contacts dihydroxyacetone phosphate. Zn(2+) is bound at residue histidine 208. Dihydroxyacetone phosphate is bound by residues 209–211 (GAS) and 230–233 (NVAT).

The protein belongs to the class II fructose-bisphosphate aldolase family. TagBP aldolase GatY subfamily. In terms of assembly, forms a complex with GatZ. It depends on Zn(2+) as a cofactor.

It catalyses the reaction D-tagatofuranose 1,6-bisphosphate = D-glyceraldehyde 3-phosphate + dihydroxyacetone phosphate. It functions in the pathway carbohydrate metabolism; D-tagatose 6-phosphate degradation; D-glyceraldehyde 3-phosphate and glycerone phosphate from D-tagatose 6-phosphate: step 2/2. Its function is as follows. Catalytic subunit of the tagatose-1,6-bisphosphate aldolase GatYZ, which catalyzes the reversible aldol condensation of dihydroxyacetone phosphate (DHAP or glycerone-phosphate) with glyceraldehyde 3-phosphate (G3P) to produce tagatose 1,6-bisphosphate (TBP). Requires GatZ subunit for full activity and stability. Is involved in the catabolism of galactitol. This Escherichia coli (strain K12 / MC4100 / BW2952) protein is D-tagatose-1,6-bisphosphate aldolase subunit GatY.